An 874-amino-acid chain; its full sequence is Mannuronan C5-epimerase AlgE6 (874 aa).

PbH1 repeat units follow at residues Asp133–Glu155, Thr157–Tyr179, Gln180–Thr202, Thr204–Arg226, Pro234–Met256, Ser257–Gly279, Ala280–Val302, and Thr320–Ser351. Hemolysin-type calcium-binding repeat units lie at residues Gly383–Asp394, Gly401–Leu417, Gly419–Phe435, Gly562–Leu578, Gly580–Phe596, Gly723–Leu739, and Gly741–Phe757. Positions Gly401–Gly420 are disordered.

Belongs to the D-mannuronate C5-epimerase family. Requires Ca(2+) as cofactor.

It is found in the secreted. It catalyses the reaction [(1-&gt;4)-beta-D-mannuronosyl](n) = [alginate](n). Its pathway is glycan biosynthesis; alginate biosynthesis. Its activity is regulated as follows. Inhibited by zinc. Functionally, converts beta-D-mannuronic acid (M) to alpha-L-guluronic acid (G), producing a polymer with gel-forming capacity, required for the formation of the cyst coat. The sequence is that of Mannuronan C5-epimerase AlgE6 from Azotobacter vinelandii.